Consider the following 192-residue polypeptide: Thymidylate kinase (192 aa).

7-14 (GIDCVGKS) contacts ATP.

It belongs to the thymidylate kinase family.

It carries out the reaction dTMP + ATP = dTDP + ADP. Phosphorylation of dTMP to form dTDP in both de novo and salvage pathways of dTTP synthesis. This is Thymidylate kinase from Campylobacter jejuni subsp. doylei (strain ATCC BAA-1458 / RM4099 / 269.97).